The following is a 212-amino-acid chain: Cyclin-dependent kinase inhibitor 3 (212 aa).

Residues 1–12 (MKPPSSIQTSEF) show a composition bias toward polar residues. The tract at residues 1 to 23 (MKPPSSIQTSEFDSSDEEPIEDE) is disordered. Positions 1–34 (MKPPSSIQTSEFDSSDEEPIEDEQTPIQISWLPL) are interaction with CDK2. A compositionally biased stretch (acidic residues) spans 13 to 23 (DSSDEEPIEDE). A Tyrosine-protein phosphatase domain is found at 32–201 (LPLSRVNYSQ…FRDKLAAHLS (170 aa)). Cysteine 140 serves as the catalytic Phosphocysteine intermediate.

Belongs to the protein-tyrosine phosphatase family. In terms of assembly, interacts with cyclin-dependent kinases such as CDK1, CDK2 and CDK3. Does not interact with CDK4. Interacts (via C-terminus) with phosphorylated CDK2 (via C-terminal helix). Interacts with MS4A3 (via C-terminus); the interaction enhances CDKN3 enzymatic activity.

It localises to the cytoplasm. The protein localises to the perinuclear region. The catalysed reaction is O-phospho-L-tyrosyl-[protein] + H2O = L-tyrosyl-[protein] + phosphate. It carries out the reaction O-phospho-L-seryl-[protein] + H2O = L-seryl-[protein] + phosphate. The enzyme catalyses O-phospho-L-threonyl-[protein] + H2O = L-threonyl-[protein] + phosphate. Its function is as follows. May play a role in cell cycle regulation. Dual specificity phosphatase active toward substrates containing either phosphotyrosine or phosphoserine residues. Dephosphorylates CDK2 at 'Thr-160' in a cyclin-dependent manner. The sequence is that of Cyclin-dependent kinase inhibitor 3 from Sus scrofa (Pig).